Consider the following 940-residue polypeptide: Phagocyte signaling-impaired protein (940 aa).

The TPR repeat unit spans residues 77–110 (STTLHVMTLCYKETDQLDKICQIFTSASKQLPGN).

Belongs to the MDM20/NAA25 family. Component of the N-terminal acetyltransferase B (NatB) complex.

It localises to the lysosome. Functionally, non-catalytic subunit of the NatB complex which catalyzes acetylation of the N-terminal methionine residues of proteins beginning with Met-Asp or Met-Glu. Has 2 roles in the larval immune response: required both for the phagocytic degradation of internalized bacteria and for the induction of Defensin in the fat body. Within the phagocytic blood cells, has a role in detection of infection and activation of the humoral immune response. This Aedes aegypti (Yellowfever mosquito) protein is Phagocyte signaling-impaired protein.